A 199-amino-acid chain; its full sequence is Imidazoleglycerol-phosphate dehydratase (199 aa).

The protein belongs to the imidazoleglycerol-phosphate dehydratase family.

The protein resides in the cytoplasm. The catalysed reaction is D-erythro-1-(imidazol-4-yl)glycerol 3-phosphate = 3-(imidazol-4-yl)-2-oxopropyl phosphate + H2O. It functions in the pathway amino-acid biosynthesis; L-histidine biosynthesis; L-histidine from 5-phospho-alpha-D-ribose 1-diphosphate: step 6/9. The protein is Imidazoleglycerol-phosphate dehydratase of Bifidobacterium longum (strain NCC 2705).